The chain runs to 62 residues: MLKDIQIYELNERIKKKKLKTYNRNKLLKLLTYVERHKICIVLYFNLIKRQLIYIEFVFIRN.

It is found in the plastid. The protein resides in the chloroplast. This is an uncharacterized protein from Guillardia theta (Cryptophyte).